Reading from the N-terminus, the 216-residue chain is U1 small nuclear ribonucleoprotein A (216 aa).

RRM domains lie at 7–86 (QTIY…YSKS) and 142–216 (QILF…FAKK). The tract at residues 97 to 142 (TFKERPKKVKPPKPAPGTDEKKDKKKKPSSAENSNPNAQTEQPPNQ) is disordered. Polar residues predominate over residues 126–142 (SAENSNPNAQTEQPPNQ).

This sequence belongs to the RRM U1 A/B'' family. As to quaternary structure, belongs to the spliceosome where it is associated with snRNP U1. Interacts with the SMN complex.

The protein localises to the nucleus. Binds stem loop II of U1 snRNA. It is the first snRNP to interact with pre-mRNA. This interaction is required for the subsequent binding of U2 snRNP and the U4/U6/U5 tri-snRNP. Plays a role in regulating sex-lethal splicing. The protein is U1 small nuclear ribonucleoprotein A (snf) of Drosophila melanogaster (Fruit fly).